The following is a 447-amino-acid chain: ATP-dependent protease ATPase subunit HslU (447 aa).

ATP is bound by residues Ile-18, 60 to 65, Asp-260, Glu-325, and Arg-397; that span reads GVGKTE.

The protein belongs to the ClpX chaperone family. HslU subfamily. As to quaternary structure, a double ring-shaped homohexamer of HslV is capped on each side by a ring-shaped HslU homohexamer. The assembly of the HslU/HslV complex is dependent on binding of ATP.

The protein resides in the cytoplasm. ATPase subunit of a proteasome-like degradation complex; this subunit has chaperone activity. The binding of ATP and its subsequent hydrolysis by HslU are essential for unfolding of protein substrates subsequently hydrolyzed by HslV. HslU recognizes the N-terminal part of its protein substrates and unfolds these before they are guided to HslV for hydrolysis. This Paraburkholderia phymatum (strain DSM 17167 / CIP 108236 / LMG 21445 / STM815) (Burkholderia phymatum) protein is ATP-dependent protease ATPase subunit HslU.